A 238-amino-acid polypeptide reads, in one-letter code: Orotidine 5'-phosphate decarboxylase (238 aa).

Residues Asp10, Lys32, 59–68 (DLKLHDIPNT), Thr122, Arg184, Gln193, Gly213, and Arg214 each bind substrate. Lys61 serves as the catalytic Proton donor.

The protein belongs to the OMP decarboxylase family. Type 1 subfamily. As to quaternary structure, homodimer.

It catalyses the reaction orotidine 5'-phosphate + H(+) = UMP + CO2. It functions in the pathway pyrimidine metabolism; UMP biosynthesis via de novo pathway; UMP from orotate: step 2/2. In terms of biological role, catalyzes the decarboxylation of orotidine 5'-monophosphate (OMP) to uridine 5'-monophosphate (UMP). This chain is Orotidine 5'-phosphate decarboxylase, found in Bacillus mycoides (strain KBAB4) (Bacillus weihenstephanensis).